The following is a 937-amino-acid chain: Aconitate hydratase A (937 aa).

The segment at 410–450 is disordered; the sequence is MANEGGFQPGSTSDLDNYNASWPGEGESAAANAEGRPSNPV. A compositionally biased stretch (polar residues) spans 418 to 429; the sequence is PGSTSDLDNYNA. Residues 433-444 show a composition bias toward low complexity; the sequence is GEGESAAANAEG. [4Fe-4S] cluster is bound by residues Cys-475, Cys-541, and Cys-544.

The protein belongs to the aconitase/IPM isomerase family. Monomer. Requires [4Fe-4S] cluster as cofactor.

It carries out the reaction citrate = D-threo-isocitrate. It catalyses the reaction (2S,3R)-3-hydroxybutane-1,2,3-tricarboxylate = 2-methyl-cis-aconitate + H2O. It functions in the pathway carbohydrate metabolism; tricarboxylic acid cycle; isocitrate from oxaloacetate: step 2/2. Its pathway is organic acid metabolism; propanoate degradation. Involved in the catabolism of short chain fatty acids (SCFA) via the tricarboxylic acid (TCA)(acetyl degradation route) and probably via the 2-methylcitrate cycle I (propionate degradation route). Catalyzes the reversible isomerization of citrate to isocitrate via cis-aconitate. Could catalyze the hydration of 2-methyl-cis-aconitate to yield (2R,3S)-2-methylisocitrate. The apo form of AcnA functions as a RNA-binding regulatory protein. This is Aconitate hydratase A (acn) from Corynebacterium efficiens (strain DSM 44549 / YS-314 / AJ 12310 / JCM 11189 / NBRC 100395).